The primary structure comprises 270 residues: MLELKPPLVLLSGPAGFGEYLKLMDHRYVGGVLLKTVTLHPKEGNPTPRMADSDFYVINRIGLENPGIHAFVENIPELPVPMIASLGGDSFEEYLEVARVFKKVADRFYAVEFNFSCPNVKEGGLSIVKNAEEWKKLLNTLRKELPDSFLIAKVGVEGIFVEDAAEFVMKTGWDGITLVNTVRGLHFEKDTMILGGLSGPVLKPIALRAVYEVKKRFPELFVIASGGVYSVKDAEEFLKVGADVIGVGSALFKDPGVVEEIGKYLLEVKR.

FMN-binding positions include S12 and 35-36 (KT). Residues K35, 59–63 (NRIGL), and N114 each bind substrate. FMN is bound at residue N114. Catalysis depends on C117, which acts as the Nucleophile. The FMN site is built by K153 and V179. 180–181 (NT) serves as a coordination point for substrate. Residues G199, 226–227 (GG), and 248–249 (GS) each bind FMN.

It belongs to the dihydroorotate dehydrogenase family. Type 1 subfamily. Heterotetramer of 2 PyrK and 2 PyrD type B subunits. It depends on FMN as a cofactor.

It is found in the cytoplasm. The enzyme catalyses (S)-dihydroorotate + NAD(+) = orotate + NADH + H(+). It participates in pyrimidine metabolism; UMP biosynthesis via de novo pathway; orotate from (S)-dihydroorotate (NAD(+) route): step 1/1. Its function is as follows. Catalyzes the conversion of dihydroorotate to orotate with NAD(+) as electron acceptor. The chain is Dihydroorotate dehydrogenase B (NAD(+)), catalytic subunit (pyrD) from Thermotoga maritima (strain ATCC 43589 / DSM 3109 / JCM 10099 / NBRC 100826 / MSB8).